We begin with the raw amino-acid sequence, 705 residues long: Solute carrier family 28 member 3 (705 aa).

Positions 1–21 (MSRSDPDPGKNSEPSKSKMSL) are enriched in basic and acidic residues. The tract at residues 1-96 (MSRSDPDPGK…TEEESEDERQ (96 aa)) is disordered. The Cytoplasmic portion of the chain corresponds to 1 to 119 (MSRSDPDPGK…FCRKHRVILQ (119 aa)). Residues 48–63 (APGNSTVRSRVVQSGE) are compositionally biased toward polar residues. The segment covering 65–74 (GRAKQDDRQI) has biased composition (basic and acidic residues). A helical transmembrane segment spans residues 120 to 140 (HTIWAVLLTGFLALVIAACAL). Over 141 to 145 (NFHRA) the chain is Extracellular. Residues 146–166 (LPLFVITLVTIFFVVWDRLMA) traverse the membrane as a helical segment. Topologically, residues 167 to 190 (KYEQRIDDVLSPGKRLLERHWFWL) are cytoplasmic. A helical membrane pass occupies residues 191–211 (KWVVWCSLILAVILWLALDTA). Over 212 to 214 (RLG) the chain is Extracellular. The chain crosses the membrane as a helical span at residues 215–236 (QQQLISFGGLVMYIVLLFLFSK). Topologically, residues 237-244 (HPTRVYWR) are cytoplasmic. Residues 245 to 264 (PVFWGIGLQFLLGLLILRTR) traverse the membrane as a helical segment. Topologically, residues 265 to 301 (PGFVAFDWMGKQVQTFLGYTDAGAQFVFGEKYTDHFF) are extracellular. Residues 302–322 (AFKILPIVVFFSTVMSMLYYL) traverse the membrane as a helical segment. Topologically, residues 323–346 (GLMQWIIRKVGWLMLVTMGSSPIE) are cytoplasmic. Positions 347–365 (SVVAAGNIFVGQTESPLLV) form an intramembrane region, helical. The Cytoplasmic portion of the chain corresponds to 366–378 (QPYLPHVTKSELH). Residues 379 to 401 (TIMTAGFATIAGSVLGAYISFGV) form a helical membrane-spanning segment. Over 402 to 403 (SS) the chain is Extracellular. The chain crosses the membrane as a helical span at residues 404-425 (THLLTASVMSAPAALAVAKLFW). The Cytoplasmic portion of the chain corresponds to 426 to 460 (PETEKPKITLKNAMKMENGDSRNLLEAATQGASSS). The chain crosses the membrane as a helical span at residues 461-486 (IPLVANIAANLIAFLALLSFVNSALS). Over 487 to 524 (WFGSMFDYPQLSFELICSYIFMPFSFMMGVDWQDRFMV) the chain is Extracellular. Positions 525–544 (AKLIGYKTFFNEFVAYEHLS) form an intramembrane region, helical. At 545–583 (KFINLRKAAGPKFVNGVQQYMSIRSETIATYALCGFANF) the chain is on the extracellular side. The chain crosses the membrane as a helical span at residues 584–594 (GSLGIVIGGLT). At 595–607 (SIAPSRKRDIASG) the chain is on the cytoplasmic side. Residues 608-630 (AMRALIAGTIACFMTACIAGMLS) traverse the membrane as a helical segment. Topologically, residues 631-705 (DTPVAINCHH…LNCGWIPNIP (75 aa)) are extracellular.

Belongs to the concentrative nucleoside transporter (CNT) (TC 2.A.41) family. In terms of assembly, homotrimer. In terms of tissue distribution, expressed in kidney; in the proximal tubule, glomerulus and cortical collecting duct.

It is found in the cell membrane. It catalyses the reaction thymidine(out) + 2 Na(+)(out) = thymidine(in) + 2 Na(+)(in). The catalysed reaction is cytidine(out) + 2 Na(+)(out) = cytidine(in) + 2 Na(+)(in). The enzyme catalyses uridine(out) + 2 Na(+)(out) = uridine(in) + 2 Na(+)(in). It carries out the reaction adenosine(out) + 2 Na(+)(out) = adenosine(in) + 2 Na(+)(in). It catalyses the reaction guanosine(out) + 2 Na(+)(out) = guanosine(in) + 2 Na(+)(in). The catalysed reaction is inosine(out) + 2 Na(+)(out) = inosine(in) + 2 Na(+)(in). Sodium-dependent, pyrimidine- and purine-selective. Involved in the homeostasis of endogenous nucleosides. Exhibits the transport characteristics of the nucleoside transport system cib or N3 subtype (N3/cib) (with marked transport of both thymidine and inosine). Employs a 2:1 sodium/nucleoside ratio. Also able to transport gemcitabine, 3'-azido-3'-deoxythymidine (AZT), ribavirin and 3-deazauridine. This Rattus norvegicus (Rat) protein is Solute carrier family 28 member 3 (Slc28a3).